Reading from the N-terminus, the 274-residue chain is 4-hydroxy-3-methylbut-2-enyl diphosphate reductase (274 aa).

A [4Fe-4S] cluster-binding site is contributed by cysteine 12. Residues histidine 36 and histidine 70 each contribute to the (2E)-4-hydroxy-3-methylbut-2-enyl diphosphate site. The dimethylallyl diphosphate site is built by histidine 36 and histidine 70. 2 residues coordinate isopentenyl diphosphate: histidine 36 and histidine 70. Residue cysteine 92 coordinates [4Fe-4S] cluster. Histidine 120 is a (2E)-4-hydroxy-3-methylbut-2-enyl diphosphate binding site. A dimethylallyl diphosphate-binding site is contributed by histidine 120. Residue histidine 120 coordinates isopentenyl diphosphate. The active-site Proton donor is glutamate 122. Residue threonine 158 coordinates (2E)-4-hydroxy-3-methylbut-2-enyl diphosphate. Residue cysteine 186 coordinates [4Fe-4S] cluster. Residues serine 214, serine 215, asparagine 216, and serine 258 each coordinate (2E)-4-hydroxy-3-methylbut-2-enyl diphosphate. Dimethylallyl diphosphate contacts are provided by serine 214, serine 215, asparagine 216, and serine 258. The isopentenyl diphosphate site is built by serine 214, serine 215, asparagine 216, and serine 258.

It belongs to the IspH family. [4Fe-4S] cluster serves as cofactor.

The enzyme catalyses isopentenyl diphosphate + 2 oxidized [2Fe-2S]-[ferredoxin] + H2O = (2E)-4-hydroxy-3-methylbut-2-enyl diphosphate + 2 reduced [2Fe-2S]-[ferredoxin] + 2 H(+). The catalysed reaction is dimethylallyl diphosphate + 2 oxidized [2Fe-2S]-[ferredoxin] + H2O = (2E)-4-hydroxy-3-methylbut-2-enyl diphosphate + 2 reduced [2Fe-2S]-[ferredoxin] + 2 H(+). It functions in the pathway isoprenoid biosynthesis; dimethylallyl diphosphate biosynthesis; dimethylallyl diphosphate from (2E)-4-hydroxy-3-methylbutenyl diphosphate: step 1/1. Its pathway is isoprenoid biosynthesis; isopentenyl diphosphate biosynthesis via DXP pathway; isopentenyl diphosphate from 1-deoxy-D-xylulose 5-phosphate: step 6/6. Catalyzes the conversion of 1-hydroxy-2-methyl-2-(E)-butenyl 4-diphosphate (HMBPP) into a mixture of isopentenyl diphosphate (IPP) and dimethylallyl diphosphate (DMAPP). Acts in the terminal step of the DOXP/MEP pathway for isoprenoid precursor biosynthesis. This Helicobacter pylori (strain P12) protein is 4-hydroxy-3-methylbut-2-enyl diphosphate reductase.